The primary structure comprises 92 residues: UPF0213 protein MGAS9429_Spy1198 (92 aa).

In terms of domain architecture, GIY-YIG spans 4–80 (KKAYMYVLEC…KRKTRSQKLA (77 aa)).

Belongs to the UPF0213 family.

The protein is UPF0213 protein MGAS9429_Spy1198 of Streptococcus pyogenes serotype M12 (strain MGAS9429).